Consider the following 271-residue polypeptide: Meiotic drive suppressor wtf35 (271 aa).

Disordered regions lie at residues 1–24 (MKNN…DHEI) and 54–75 (TVPE…ERRQ). Over residues 57-69 (EDSSTGPTETANP) the composition is skewed to polar residues. The next 4 membrane-spanning stretches (helical) occupy residues 90–110 (LLIS…CVNP), 120–140 (AFSV…FCFF), 176–196 (WENM…VGSP), and 213–233 (SLAE…AETV).

The protein belongs to the WTF family. Homomer. Interacts with other proteins that exhibit high sequence similarity.

It localises to the spore membrane. Its subcellular location is the vacuole membrane. Acts as a suppressor component of the dual wtf meiotic drive system, and can suppress but not confer meiotic drive by compatible poisons. Wtf meiotic drive systems promote unequal transmission of alleles from the parental zygote to progeny spores by encoding a poison and an antidote from the same locus; the poison is trans-acting and forms toxic aggregates in all spores within an ascus, wherease the antidote is spore-specific and targets aggregates for degradation by the vacuole. Meiotic drive by wtf systems therefore lead to poisoning of all progeny that do not inherit the dual poison/antidote allele, or express a compatible antidote. The polypeptide is Meiotic drive suppressor wtf35 (Schizosaccharomyces kambucha (Fission yeast)).